The following is a 209-amino-acid chain: MSTKSRTRSKTRLSRALGIPLTPKAAKYLEKRPYAPGEHGRSKRKQDSDYAVRLREKQRLRAQYGIREAQLKIAFQEARRTQGLTGENLVEILEQRLDALVVRSGLARTTAQARQLVVHRHIMVDGKIVDRPSFRVKAGQMIHVKPRSEGTEPFQVAAAGGHADVLPKLPSYLEVELDKLQARLVRLPKRAEVPVTCEVQLVVEYYAAR.

Residues 1–13 (MSTKSRTRSKTRL) show a composition bias toward basic residues. 2 disordered regions span residues 1 to 20 (MSTK…LGIP) and 28 to 49 (YLEK…QDSD). Positions 95–176 (QRLDALVVRS…PKLPSYLEVE (82 aa)) constitute an S4 RNA-binding domain.

This sequence belongs to the universal ribosomal protein uS4 family. As to quaternary structure, part of the 30S ribosomal subunit. Contacts protein S5. The interaction surface between S4 and S5 is involved in control of translational fidelity.

In terms of biological role, one of the primary rRNA binding proteins, it binds directly to 16S rRNA where it nucleates assembly of the body of the 30S subunit. With S5 and S12 plays an important role in translational accuracy. The sequence is that of Small ribosomal subunit protein uS4 from Clavibacter michiganensis subsp. michiganensis (strain NCPPB 382).